A 367-amino-acid chain; its full sequence is MRVSEGRVTVTVPEQPEAGKGADVFFNPVQELNRDITVAALRAYRERTPRVSTYLDATAASGIRGVRAAANDWETTLCDIDDDATALCEQNLERNDLAASVRRSDANVLMHSEAFDVVDVDPFGTPIPFADAAVQGTKHLLCVTATDTAPLCGAHFESGVRSYGAVPRNTEFHAEMGMRVLLSAMVRTAARYDIAARPILSHATKHYARTYLEFDHGAKVANDCIDELGYVHHCQHCLWRDHDYGLIADPPEDCPVCEKHLQTAGPIWLGRTCDPEFVSAVSEQVSEEMGTADEAKELLATLGAEIDTPTHYDQHRLCKRWGRGAEAMDEFIEKLRDAGYAASRTHYGGTTFKTDADVVEIREATAD.

In terms of domain architecture, Trm1 methyltransferase spans 1 to 365 (MRVSEGRVTV…ADVVEIREAT (365 aa)). S-adenosyl-L-methionine contacts are provided by arginine 34, arginine 64, aspartate 79, aspartate 105, and alanine 106. Zn(2+)-binding residues include cysteine 234, cysteine 237, cysteine 254, and cysteine 257.

The protein belongs to the class I-like SAM-binding methyltransferase superfamily. Trm1 family.

The catalysed reaction is guanosine(26) in tRNA + 2 S-adenosyl-L-methionine = N(2)-dimethylguanosine(26) in tRNA + 2 S-adenosyl-L-homocysteine + 2 H(+). Dimethylates a single guanine residue at position 26 of a number of tRNAs using S-adenosyl-L-methionine as donor of the methyl groups. The polypeptide is tRNA (guanine(26)-N(2))-dimethyltransferase (Haloarcula marismortui (strain ATCC 43049 / DSM 3752 / JCM 8966 / VKM B-1809) (Halobacterium marismortui)).